The following is a 518-amino-acid chain: Delta(14)-sterol reductase erg24B (518 aa).

Residue Asn-36 is glycosylated (N-linked (GlcNAc...) asparagine). The next 6 helical transmembrane spans lie at 110–130 (VTMW…FLPG), 150–170 (AFLS…LYGT), 182–202 (YVQV…FVYL), 294–314 (IVLT…MEPA), 321–341 (VIMD…VPFL), and 355–375 (ELGL…YVIF). NADP(+) contacts are provided by residues Lys-382, Arg-386, Leu-409, Trp-414, and 421-422 (NY). Residues 464–484 (SRGWGMIFTYFYMIYFGVLLL) form a helical membrane-spanning segment. NADP(+) is bound by residues Asp-490, 494–498 (CKRKY), and Tyr-505.

Belongs to the ERG4/ERG24 family.

Its subcellular location is the endoplasmic reticulum membrane. It functions in the pathway steroid metabolism; ergosterol biosynthesis. Its function is as follows. Delta(14)-sterol reductase; part of the third module of ergosterol biosynthesis pathway that includes the late steps of the pathway. Catalyzes the reduction of the C14=C15 double bond within 4,4,24-trimethyl ergosta-8,14,24(28)-trienolto produce 4,4-dimethylfecosterol. The third module or late pathway involves the ergosterol synthesis itself through consecutive reactions that mainly occur in the endoplasmic reticulum (ER) membrane. Firstly, the squalene synthase erg9 catalyzes the condensation of 2 farnesyl pyrophosphate moieties to form squalene, which is the precursor of all steroids. Squalene synthase is crucial for balancing the incorporation of farnesyl diphosphate (FPP) into sterol and nonsterol isoprene synthesis. Secondly, squalene is converted into lanosterol by the consecutive action of the squalene epoxidase erg1 and the lanosterol synthase erg7. Then, the delta(24)-sterol C-methyltransferase erg6 methylates lanosterol at C-24 to produce eburicol. Eburicol is the substrate of the sterol 14-alpha demethylase encoded by cyp51A and cyp51B, to yield 4,4,24-trimethyl ergosta-8,14,24(28)-trienol. The C-14 reductase erg24 then reduces the C14=C15 double bond which leads to 4,4-dimethylfecosterol. A sequence of further demethylations at C-4, involving the C-4 demethylation complex containing the C-4 methylsterol oxidases erg25A or erg25B, the sterol-4-alpha-carboxylate 3-dehydrogenase erg26 and the 3-keto-steroid reductase erg27, leads to the production of fecosterol via 4-methylfecosterol. The C-8 sterol isomerase erg2 then catalyzes the reaction which results in unsaturation at C-7 in the B ring of sterols and thus converts fecosterol to episterol. The sterol-C5-desaturase erg3B then catalyzes the introduction of a C-5 double bond in the B ring to produce 5-dehydroepisterol. The 2 other sterol-C5-desaturases, erg3A and erg3C, seem to be less important in ergosterol biosynthesis. The C-22 sterol desaturase erg5 further converts 5-dehydroepisterol into ergosta-5,7,22,24(28)-tetraen-3beta-ol by forming the C-22(23) double bond in the sterol side chain. Finally, ergosta-5,7,22,24(28)-tetraen-3beta-ol is substrate of the C-24(28) sterol reductases erg4A and erg4B to produce ergosterol. Possible alternative sterol biosynthetic pathways might exist from fecosterol to ergosterol, depending on the activities of the erg3 isoforms. The sequence is that of Delta(14)-sterol reductase erg24B from Aspergillus fumigatus (strain ATCC MYA-4609 / CBS 101355 / FGSC A1100 / Af293) (Neosartorya fumigata).